The sequence spans 1222 residues: BOS complex subunit NOMO1 (1222 aa).

The first 31 residues, 1–31 (MLVGQGAGPLGPAVVTAAVVLLLSGVGPAHG), serve as a signal peptide directing secretion. At 32-1155 (SEDIVVGCGG…NPTRKLPEQD (1124 aa)) the chain is on the extracellular side. N-linked (GlcNAc...) asparagine glycosylation is found at Asn50, Asn218, and Asn618. A helical membrane pass occupies residues 1156–1176 (IAQGSYIALPLTLLVLLAGYN). Over 1177 to 1222 (HDKLIPLLLQLTSRLQGVRALGQAASDNSGPEDAKRQAKKQKTRRT) the chain is Cytoplasmic. The segment at 1198–1222 (GQAASDNSGPEDAKRQAKKQKTRRT) is disordered. Ser1205 bears the Phosphoserine mark. Over residues 1213–1222 (QAKKQKTRRT) the composition is skewed to basic residues.

In terms of assembly, component of the back of Sec61 (BOS) complex, composed of NCLN/Nicalin, NOMO (NOMO1, NOMO2 or NOMO3) and TMEM147. The BOS complex is part of the multi-pass translocon (MPT) complex, composed of three subcomplexes, the GEL complex (composed of RAB5IF/OPTI and TMCO1), the BOS complex (composed of NCLN/Nicalin, NOMO and TMEM147) and the PAT complex (composed of WDR83OS/Asterix and CCDC47). The MPT complex associates with the SEC61 complex. Due to the strong similarity between NOMO1, NOMO2 and NOMO3, similar interaction pattern probably occur for the three gene copies. Expressed in colon tumor tissue and in adjacent normal colonic mucosa.

It localises to the endoplasmic reticulum membrane. Its function is as follows. Component of the multi-pass translocon (MPT) complex that mediates insertion of multi-pass membrane proteins into the lipid bilayer of membranes. The MPT complex takes over after the SEC61 complex: following membrane insertion of the first few transmembrane segments of proteins by the SEC61 complex, the MPT complex occludes the lateral gate of the SEC61 complex to promote insertion of subsequent transmembrane regions. This is BOS complex subunit NOMO1 (NOMO1) from Homo sapiens (Human).